Reading from the N-terminus, the 816-residue chain is Endo-acting ulvan lyase (816 aa).

The signal sequence occupies residues 1–23 (MGTSVRRISVVLMMLFGTNFCWS).

The protein belongs to the polysaccharide lyase family.

Its subcellular location is the cell surface. The protein localises to the periplasm. Ulvan lyase involved in ulvan degradation. Ulvan is the main polysaccharide component of the Ulvales (green seaweed) cell wall. It is composed of disaccharide building blocks comprising 3-sulfated rhamnose (Rha3S) linked to D-glucuronic acid (GlcA), L-iduronic acid (IduA), or D-xylose (Xyl). Ulvan lyase catalyzes the endolytic cleavage of the glycosidic bond between Rha3S and the uronic acids GlcA or IduA, producing oligosaccharides that have unsaturated 4-deoxy-L-threo-hex-4-enopyranosiduronic acid (deltaUA) at the non-reducing end. This results eventually in the degradation of the ulvan polysaccharide into deltaUA-Rha3S disaccharides and deltaUA-Rha3S-Xyl-Rha3S tetrasaccharides. The protein is Endo-acting ulvan lyase of Formosa agariphila (strain DSM 15362 / KCTC 12365 / LMG 23005 / KMM 3901 / M-2Alg 35-1).